Here is a 400-residue protein sequence, read N- to C-terminus: Argininosuccinate synthase (400 aa).

ATP is bound at residue 9–17; sequence AYSGGLDTS. Position 87 (tyrosine 87) interacts with L-citrulline. Position 117 (glycine 117) interacts with ATP. L-aspartate contacts are provided by threonine 119, asparagine 123, and aspartate 124. Asparagine 123 is a binding site for L-citrulline. L-citrulline contacts are provided by arginine 127, serine 176, serine 185, glutamate 261, and tyrosine 273.

Belongs to the argininosuccinate synthase family. Type 1 subfamily. In terms of assembly, homotetramer.

It localises to the cytoplasm. It carries out the reaction L-citrulline + L-aspartate + ATP = 2-(N(omega)-L-arginino)succinate + AMP + diphosphate + H(+). It participates in amino-acid biosynthesis; L-arginine biosynthesis; L-arginine from L-ornithine and carbamoyl phosphate: step 2/3. The polypeptide is Argininosuccinate synthase (Chlorobium luteolum (strain DSM 273 / BCRC 81028 / 2530) (Pelodictyon luteolum)).